A 175-amino-acid polypeptide reads, in one-letter code: MAIDFSKYIASVQDFPNKGIVFRDITPILQNGELYRAATHELAEYAKSRNADVIVGPEARGFIVGCPVATELGLGFVPARKPHKLPREVERASYDLEYGSNSLEMHKDAIKPGQRVVLCDDLMATAGTLRASKELIENLGGKLVGAAFYIELPDLKGREKLPDVDIYSLVKYHGA.

Belongs to the purine/pyrimidine phosphoribosyltransferase family. As to quaternary structure, homodimer.

It is found in the cytoplasm. The enzyme catalyses AMP + diphosphate = 5-phospho-alpha-D-ribose 1-diphosphate + adenine. It participates in purine metabolism; AMP biosynthesis via salvage pathway; AMP from adenine: step 1/1. Catalyzes a salvage reaction resulting in the formation of AMP, that is energically less costly than de novo synthesis. The protein is Adenine phosphoribosyltransferase of Lactobacillus acidophilus (strain ATCC 700396 / NCK56 / N2 / NCFM).